The following is a 149-amino-acid chain: Angiogenin (149 aa).

A signal peptide spans 1–24 (MVMGLGPLVLIFVLGLGVTPPTLA). Glutamine 25 is subject to Pyrrolidone carboxylic acid. Histidine 37 (proton acceptor) is an active-site residue. Position 45 (arginine 45) interacts with tRNA. 3 cysteine pairs are disulfide-bonded: cysteine 50/cysteine 105, cysteine 63/cysteine 116, and cysteine 81/cysteine 131. A Nucleolar localization signal motif is present at residues 55–59 (KRRDL). Residues cysteine 105 and isoleucine 127 each contribute to the tRNA site. Histidine 138 (proton donor) is an active-site residue.

Belongs to the pancreatic ribonuclease family. In terms of assembly, homodimer. Interacts with RNH1; inhibiting ANG ribonuclease activity. Interacts with PCNA.

The protein localises to the secreted. Its subcellular location is the nucleus. It is found in the nucleolus. It localises to the cytoplasm. The protein resides in the stress granule. With respect to regulation, has weak tRNA ribonuclease activity by itself due to partial autoinhibition by its C-terminus, which folds into a short alpha-helix that partially occludes the substrate-binding site. In absence of stress, the ribonuclease activity is inhibited by RNH1 in the cytoplasm. In response to stress, dissociates from RNH1 in the cytoplasm and associates with cytoplasmic ribosomes with vacant A-sites: ribosomes directly activate the tRNA ribonuclease activity of ANG by refolding the C-terminal alpha-helix. In response to stress, the angiogenic activity of ANG is inhibited by RNH1 in the nucleus. Functionally, secreted ribonuclease that can either promote or restrict cell proliferation of target cells, depending on the context. Endocytosed in target cells via its receptor PLXNB2 and translocates to the cytoplasm or nucleus. Under stress conditions, localizes to the cytoplasm and promotes the assembly of stress granules (SGs): specifically cleaves a subset of tRNAs within anticodon loops to produce tRNA-derived stress-induced fragments (tiRNAs), resulting in translation repression and inhibition of cell proliferation. tiRNas also prevent formation of apoptosome, thereby promoting cell survival. Preferentially cleaves RNAs between a pyrimidine and an adenosine residue, suggesting that it cleaves the anticodon loop of tRNA(Ala) (32-UUAGCAU-38) after positions 33 and 36. Cleaves a subset of tRNAs, including tRNA(Ala), tRNA(Glu), tRNA(Gly), tRNA(Lys), tRNA(Val), tRNA(His), tRNA(Asp) and tRNA(Sec). Under growth conditions and in differentiated cells, translocates to the nucleus and stimulates ribosomal RNA (rRNA) transcription, including that containing the initiation site sequences of 45S rRNA, thereby promoting cell growth and proliferation. Angiogenin induces vascularization of normal and malignant tissues via its ability to promote rRNA transcription. Involved in hematopoietic stem and progenitor cell (HSPC) growth and survival by promoting rRNA transcription in growth conditions and inhibiting translation in response to stress, respectively. Mediates the crosstalk between myeloid and intestinal epithelial cells to protect the intestinal epithelial barrier integrity: secreted by myeloid cells and promotes intestinal epithelial cells proliferation and survival. Also mediates osteoclast-endothelial cell crosstalk in growing bone: produced by osteoclasts and protects the neighboring vascular cells against senescence by promoting rRNA transcription. The protein is Angiogenin (ANG) of Oryctolagus cuniculus (Rabbit).